We begin with the raw amino-acid sequence, 408 residues long: Snake venom metalloproteinase BaP1 (408 aa).

Positions 1-20 (MIEVLLVTICLAVFPYQGSS) are cleaved as a signal peptide. A propeptide spanning residues 21–191 (IILESGNVND…KASQSNLTPE (171 aa)) is cleaved from the precursor. Gln-192 is subject to Pyrrolidone carboxylic acid. In terms of domain architecture, Peptidase M12B spans 198-394 (RYIELAVVAD…HNPQCILNKP (197 aa)). Disulfide bonds link Cys-309–Cys-389, Cys-349–Cys-373, and Cys-351–Cys-356. His-334 contacts Zn(2+). Glu-335 is a catalytic residue. Zn(2+)-binding residues include His-338 and His-344. Residues 395–408 (LLTVSGNELLEAGE) constitute a propeptide that is removed on maturation.

Belongs to the venom metalloproteinase (M12B) family. P-I subfamily. In terms of assembly, monomer. Requires Zn(2+) as cofactor. In terms of tissue distribution, expressed by the venom gland.

It is found in the secreted. Its activity is regulated as follows. Inhibited by EDTA, partially inhibited by o-phenantropine, and not inhibited by PMSF, pepstatin A, and aprotinin. Zinc metalloprotease that exhibits a weak hemorrhagic activity (with a minimum hemorrhagic dose of 20 ug by intradermal and intramuscular injection into mice). The basal membrane components collagen (all chains of type IV) (COL4A4), laminin and nidogen are all degraded by this toxin. Rapidly degrades the Aalpha-chain (FGA) of fibrinogen, and later on, degrades the Bbeta-chain (FGB) of fibrinogen. Also activates the complement system, and induces rat neutrophil chemotaxis. Induces edema in mouse food pad and shows a mild myotoxicity. In Bothrops asper (Terciopelo), this protein is Snake venom metalloproteinase BaP1.